The primary structure comprises 357 residues: Vomeronasal type-1 receptor 5 (357 aa).

Over 1–3 the chain is Extracellular; the sequence is MLK. A helical membrane pass occupies residues 4 to 24; sequence LVIIENMAEIMLFSLDLLLFS. The Cytoplasmic portion of the chain corresponds to 25–52; the sequence is TDILCFNFPSKMIKLPGFITIQIFFYPQ. Residues 53–73 traverse the membrane as a helical segment; the sequence is ASFGISANTILFLFHIFTFVF. Residues 74–81 lie on the Extracellular side of the membrane; it reads SHRSKSID. The chain crosses the membrane as a helical span at residues 82–102; sequence MIISHLSLIHILLLFTQAILV. Residues 103-130 are Cytoplasmic-facing; that stretch reads SLDFFGSQNTQDDLRCKVIVFLNKVMRG. The chain crosses the membrane as a helical span at residues 131–151; the sequence is LSICTPCLLNVLQAIISPSIF. Residues 152-163 are Extracellular-facing; sequence SLAKLKHPSASH. The chain crosses the membrane as a helical span at residues 164 to 184; it reads ILGFFLFSWVLNMFIGVIFCC. Residues 185-269 lie on the Cytoplasmic side of the membrane; sequence TLWLPPVKWG…PVSPVKRASQ (85 aa). Residues 270-290 traverse the membrane as a helical segment; the sequence is TILLLVSFVFIYWVDFMFSFS. Over 291-300 the chain is Extracellular; the sequence is RGVTWINDSL. Residue Asn297 is glycosylated (N-linked (GlcNAc...) asparagine). A helical transmembrane segment spans residues 301-321; it reads LVWFQVIVANSYATISPLMLI. Residues 322–357 lie on the Cytoplasmic side of the membrane; that stretch reads YADNQIFKTLQMLWFKYLSPPKLMLKFNRQCGSTKK.

Belongs to the G-protein coupled receptor 1 family.

It is found in the cell membrane. Putative pheromone receptor. This chain is Vomeronasal type-1 receptor 5 (VN1R5), found in Gorilla gorilla gorilla (Western lowland gorilla).